Here is a 137-residue protein sequence, read N- to C-terminus: Small ribosomal subunit protein uS11 (137 aa).

Positions Met1–His30 are disordered. Basic residues predominate over residues Gly8–Lys21.

The protein belongs to the universal ribosomal protein uS11 family. As to quaternary structure, part of the 30S ribosomal subunit. Interacts with proteins S7 and S18. Binds to IF-3.

Functionally, located on the platform of the 30S subunit, it bridges several disparate RNA helices of the 16S rRNA. Forms part of the Shine-Dalgarno cleft in the 70S ribosome. This Mycolicibacterium vanbaalenii (strain DSM 7251 / JCM 13017 / BCRC 16820 / KCTC 9966 / NRRL B-24157 / PYR-1) (Mycobacterium vanbaalenii) protein is Small ribosomal subunit protein uS11.